The following is a 422-amino-acid chain: Tyrosine--tRNA ligase (422 aa).

Tyrosine 35 contacts L-tyrosine. Residues 40–49 (PTAASLHVGH) carry the 'HIGH' region motif. Positions 169 and 173 each coordinate L-tyrosine. Residues 229-233 (KFGKT) carry the 'KMSKS' region motif. Lysine 232 contacts ATP. The region spanning 352–418 (VRLAQLFADT…GKKSLASVAV (67 aa)) is the S4 RNA-binding domain.

Belongs to the class-I aminoacyl-tRNA synthetase family. TyrS type 1 subfamily. Homodimer.

The protein resides in the cytoplasm. The enzyme catalyses tRNA(Tyr) + L-tyrosine + ATP = L-tyrosyl-tRNA(Tyr) + AMP + diphosphate + H(+). Catalyzes the attachment of tyrosine to tRNA(Tyr) in a two-step reaction: tyrosine is first activated by ATP to form Tyr-AMP and then transferred to the acceptor end of tRNA(Tyr). The sequence is that of Tyrosine--tRNA ligase from Kineococcus radiotolerans (strain ATCC BAA-149 / DSM 14245 / SRS30216).